The chain runs to 340 residues: Lipoyl synthase (340 aa).

Positions 83, 88, 94, 109, 113, 116, and 323 each coordinate [4Fe-4S] cluster. In terms of domain architecture, Radical SAM core spans 95 to 312 (FSGGTATFMI…AEEGYKMGFK (218 aa)).

This sequence belongs to the radical SAM superfamily. Lipoyl synthase family. It depends on [4Fe-4S] cluster as a cofactor.

Its subcellular location is the cytoplasm. The catalysed reaction is [[Fe-S] cluster scaffold protein carrying a second [4Fe-4S](2+) cluster] + N(6)-octanoyl-L-lysyl-[protein] + 2 oxidized [2Fe-2S]-[ferredoxin] + 2 S-adenosyl-L-methionine + 4 H(+) = [[Fe-S] cluster scaffold protein] + N(6)-[(R)-dihydrolipoyl]-L-lysyl-[protein] + 4 Fe(3+) + 2 hydrogen sulfide + 2 5'-deoxyadenosine + 2 L-methionine + 2 reduced [2Fe-2S]-[ferredoxin]. It functions in the pathway protein modification; protein lipoylation via endogenous pathway; protein N(6)-(lipoyl)lysine from octanoyl-[acyl-carrier-protein]: step 2/2. In terms of biological role, catalyzes the radical-mediated insertion of two sulfur atoms into the C-6 and C-8 positions of the octanoyl moiety bound to the lipoyl domains of lipoate-dependent enzymes, thereby converting the octanoylated domains into lipoylated derivatives. This is Lipoyl synthase from Pseudomonas fluorescens (strain Pf0-1).